Here is a 72-residue protein sequence, read N- to C-terminus: uncharacterized protein (72 aa).

The disordered stretch occupies residues 15–62 (NNNYNNNNNNNNNNNNNNNNNNNNNNNNNNININNNNNNNNNNNNNNN).

This is an uncharacterized protein from Dictyostelium discoideum (Social amoeba).